A 116-amino-acid polypeptide reads, in one-letter code: uncharacterized protein (116 aa).

This is an uncharacterized protein from Schizosaccharomyces pombe (strain 972 / ATCC 24843) (Fission yeast).